We begin with the raw amino-acid sequence, 191 residues long: Pyridoxal 5'-phosphate synthase subunit PdxT (191 aa).

46–48 (GES) is an L-glutamine binding site. The active-site Nucleophile is cysteine 78. Residues arginine 105 and 133-134 (IR) contribute to the L-glutamine site. Active-site charge relay system residues include histidine 169 and glutamate 171.

The protein belongs to the glutaminase PdxT/SNO family. As to quaternary structure, in the presence of PdxS, forms a dodecamer of heterodimers. Only shows activity in the heterodimer.

It carries out the reaction aldehydo-D-ribose 5-phosphate + D-glyceraldehyde 3-phosphate + L-glutamine = pyridoxal 5'-phosphate + L-glutamate + phosphate + 3 H2O + H(+). The enzyme catalyses L-glutamine + H2O = L-glutamate + NH4(+). It participates in cofactor biosynthesis; pyridoxal 5'-phosphate biosynthesis. Its function is as follows. Catalyzes the hydrolysis of glutamine to glutamate and ammonia as part of the biosynthesis of pyridoxal 5'-phosphate. The resulting ammonia molecule is channeled to the active site of PdxS. In Fervidobacterium nodosum (strain ATCC 35602 / DSM 5306 / Rt17-B1), this protein is Pyridoxal 5'-phosphate synthase subunit PdxT.